Reading from the N-terminus, the 258-residue chain is tRNA pseudouridine synthase A (258 aa).

The active-site Nucleophile is the aspartate 52. Substrate is bound at residue tyrosine 110.

This sequence belongs to the tRNA pseudouridine synthase TruA family. As to quaternary structure, homodimer.

The catalysed reaction is uridine(38/39/40) in tRNA = pseudouridine(38/39/40) in tRNA. Its function is as follows. Formation of pseudouridine at positions 38, 39 and 40 in the anticodon stem and loop of transfer RNAs. The sequence is that of tRNA pseudouridine synthase A from Francisella tularensis subsp. novicida (strain U112).